A 119-amino-acid chain; its full sequence is Protein TusC (119 aa).

It belongs to the DsrF/TusC family. Heterohexamer, formed by a dimer of trimers. The hexameric TusBCD complex contains 2 copies each of TusB, TusC and TusD. The TusBCD complex interacts with TusE.

The protein resides in the cytoplasm. Its function is as follows. Part of a sulfur-relay system required for 2-thiolation of 5-methylaminomethyl-2-thiouridine (mnm(5)s(2)U) at tRNA wobble positions. The protein is Protein TusC of Shigella dysenteriae serotype 1 (strain Sd197).